The chain runs to 338 residues: RNA 3'-terminal phosphate cyclase (338 aa).

ATP contacts are provided by residues Gln103 and 283-287 (YLADQ). Residue His308 is the Tele-AMP-histidine intermediate of the active site.

It belongs to the RNA 3'-terminal cyclase family. Type 1 subfamily.

The protein resides in the cytoplasm. It carries out the reaction a 3'-end 3'-phospho-ribonucleotide-RNA + ATP = a 3'-end 2',3'-cyclophospho-ribonucleotide-RNA + AMP + diphosphate. Catalyzes the conversion of 3'-phosphate to a 2',3'-cyclic phosphodiester at the end of RNA. The mechanism of action of the enzyme occurs in 3 steps: (A) adenylation of the enzyme by ATP; (B) transfer of adenylate to an RNA-N3'P to produce RNA-N3'PP5'A; (C) and attack of the adjacent 2'-hydroxyl on the 3'-phosphorus in the diester linkage to produce the cyclic end product. The biological role of this enzyme is unknown but it is likely to function in some aspects of cellular RNA processing. This is RNA 3'-terminal phosphate cyclase from Escherichia coli O6:K15:H31 (strain 536 / UPEC).